The chain runs to 1363 residues: Zinc finger protein 541 (1363 aa).

2 disordered regions span residues 1–23 (MEPY…SFSE) and 106–137 (LGAL…SPQN). 3 C2H2-type zinc fingers span residues 140–162 (LDCS…YLTH), 168–190 (HVCK…MLTH), and 196–221 (FVCI…EVQH). 4 disordered regions span residues 232–269 (EEEA…GSVL), 286–387 (KIPS…GWPE), 440–532 (VASR…PGGL), and 574–741 (QVAT…GYRL). The span at 311 to 321 (SLGSSSCTPAS) shows a compositional bias: polar residues. Basic and acidic residues predominate over residues 335–345 (EETHPPRKEAA). A compositionally biased stretch (low complexity) spans 453-465 (PSSTPTSVEPSPS). Residues 597 to 608 (GPWPPQTLPPAP) show a composition bias toward pro residues. Over residues 659-670 (PPSLTGPGLLPS) the composition is skewed to low complexity. Residues 838-860 (FVCKNCSQMFYTEKGLSSHMCFH) form a C2H2-type 4 zinc finger. The disordered stretch occupies residues 935–978 (QGQEKDGEERDSKESCQYRKRKKRPQPKALFAPPAPSALGEPGP). Residues 937–951 (QEKDGEERDSKESCQ) show a composition bias toward basic and acidic residues. The region spanning 1063-1155 (PHINVGSRFQ…VALETLLLRG (93 aa)) is the ELM2 domain. One can recognise an SANT domain in the interval 1170–1221 (TGSDIWTPMEKRLFKKAFCAHKKDFYLIHKMIQTKSVAQCVEYYYIWKKMVK). The tract at residues 1243–1298 (RTEDKVTCSPRERPTHRPTPELKIKTKSYRRESILHSSPSAAPKRTPEPPGSVESQ) is disordered. Over residues 1244–1276 (TEDKVTCSPRERPTHRPTPELKIKTKSYRRESI) the composition is skewed to basic and acidic residues. The segment at 1301–1323 (FPCRECERVFDKIKSRNAHMKRH) adopts a C2H2-type 5 zinc-finger fold. The interval 1343–1363 (LKEEEEEEEEELGADMGPLQW) is disordered. The span at 1345-1355 (EEEEEEEEELG) shows a compositional bias: acidic residues.

In terms of assembly, interacts with DNTTIP1. Identified in a complex with KCTD19, HDAC1 and HSPA2. Identified in a complex with HDAC1, HDAC2, DNTTIP1 and KCTD19. Identified in a complex with KCTD19 and HDAC1. In terms of tissue distribution, germ-cell-specific. Specifically present in testicular spermatogenic cells, but not in testicular and mature sperm. During spermatogenesis, it is present in spermatocytes and round spermatids only (at protein level).

It is found in the nucleus. Functionally, transcription regulator which is essential for male fertility and for the completion of meiotic prophase in spermatocytes. Regulates progression of the pachytene stage of meiotic prophase by activating the expression of genes involved in meiosis and post-meiosis during spermatogenesis. Maintains the repression of pre-pachytene transcriptional programs, including meiotic double-strand breaks (DSB) formation genes in pachytene spermatocytes and suppresses aberrant DSB formation after mid-pachytene, thus ensuring meiosis progression. This chain is Zinc finger protein 541 (Znf541), found in Mus musculus (Mouse).